The sequence spans 487 residues: Protein NEN2 (487 aa).

The 162-residue stretch at 18–179 (FFDVETTIPF…LDDVRMNFEV (162 aa)) folds into the Exonuclease domain. 2 residues coordinate Mg(2+): Asp-20 and Glu-22. The active-site Proton donor/acceptor is the His-167. A Mg(2+)-binding site is contributed by Asp-172. Disordered stretches follow at residues 200–233 (NSVT…TGEN) and 269–291 (SDVP…GTGD). Polar residues predominate over residues 221–233 (PLQSPTDQQTGEN).

It depends on Mg(2+) as a cofactor. Expressed in the sieve elements and phloem pole pericycle cells.

It localises to the cytoplasm. Its subcellular location is the nucleus. Probable exonuclease involved in enuclation of sieve elements. This Arabidopsis thaliana (Mouse-ear cress) protein is Protein NEN2.